We begin with the raw amino-acid sequence, 540 residues long: Zinc finger CCCH domain-containing protein 46 (540 aa).

Residues 148 to 175 (GFGGVPCSYFARGFCKNGASCRFVHSDG) form a C3H1-type zinc finger. Residues 258-334 (RQIYLTFPAD…RVLVKPYKEK (77 aa)) form the RRM domain. 2 stretches are compositionally biased toward basic and acidic residues: residues 337–351 (VPDKYRTNQTTEREL) and 436–450 (EYDGGEKGKGSSKEG). 3 disordered regions span residues 337–365 (VPDKYRTNQTTERELSPTGLDSSPRDVLG), 436–469 (EYDGGEKGKGSSKEGSDDDTMNLPERLEDSLPDS), and 490–514 (SDLWSPSSDNDDNSTPSTLSDSFNS). Residue S451 is modified to Phosphoserine. A compositionally biased stretch (low complexity) spans 490-511 (SDLWSPSSDNDDNSTPSTLSDS).

Functionally, possesses RNA-binding and ribonuclease activities in vitro. The protein is Zinc finger CCCH domain-containing protein 46 of Arabidopsis thaliana (Mouse-ear cress).